The chain runs to 464 residues: Uronate isomerase (464 aa).

This sequence belongs to the metallo-dependent hydrolases superfamily. Uronate isomerase family.

It catalyses the reaction D-glucuronate = D-fructuronate. The catalysed reaction is aldehydo-D-galacturonate = keto-D-tagaturonate. The protein operates within carbohydrate metabolism; pentose and glucuronate interconversion. The polypeptide is Uronate isomerase (Caldicellulosiruptor bescii (strain ATCC BAA-1888 / DSM 6725 / KCTC 15123 / Z-1320) (Anaerocellum thermophilum)).